A 434-amino-acid polypeptide reads, in one-letter code: Histidinol dehydrogenase (434 aa).

Residues glutamate 260 and histidine 263 each coordinate Zn(2+). Active-site proton acceptor residues include glutamate 330 and histidine 331. Histidine 423 serves as a coordination point for Zn(2+).

Belongs to the histidinol dehydrogenase family. It depends on Zn(2+) as a cofactor.

It carries out the reaction L-histidinol + 2 NAD(+) + H2O = L-histidine + 2 NADH + 3 H(+). The protein operates within amino-acid biosynthesis; L-histidine biosynthesis; L-histidine from 5-phospho-alpha-D-ribose 1-diphosphate: step 9/9. Its function is as follows. Catalyzes the sequential NAD-dependent oxidations of L-histidinol to L-histidinaldehyde and then to L-histidine. This is Histidinol dehydrogenase (hisD) from Synechocystis sp. (strain ATCC 27184 / PCC 6803 / Kazusa).